Consider the following 341-residue polypeptide: MNSYLRKLVEGKHLTEEEMYRAGLLLLNENILESEIAAFLVLLKAKGETAEEIYGLVRALREKALPFSNHIQGAMDNCGTGGDGAQTFNISTTSAFVLAGAGVKVAKHGNRAVSSKTGSADLLEELGVNISSTPSEIDYLLEHVGIAFLFAPAMHPALTRIMKIRKELNVPTIFNLIGPLTNPVNLETQFVGIYKRDMLLPVAQVLQKLGRKQALVVNGSGFLDEASLQGENHVVILKDNEIVEMSIDPEKYGFSRVKNEEIRGGNSKENAKITLEVLSGEKSVYRDTVLLNAGLALFANGKTETIEEGIKLAAHSIDSGKALAKLNLLIVASNEKLERVN.

Residues Gly79, 82–83 (GD), Thr87, 89–92 (NIST), 107–115 (KHGNRAVSS), and Ser119 contribute to the 5-phospho-alpha-D-ribose 1-diphosphate site. Gly79 contributes to the anthranilate binding site. Residue Ser91 coordinates Mg(2+). An anthranilate-binding site is contributed by Asn110. Arg165 lines the anthranilate pocket. Mg(2+)-binding residues include Asp224 and Glu225.

Belongs to the anthranilate phosphoribosyltransferase family. Homodimer. It depends on Mg(2+) as a cofactor.

It carries out the reaction N-(5-phospho-beta-D-ribosyl)anthranilate + diphosphate = 5-phospho-alpha-D-ribose 1-diphosphate + anthranilate. It functions in the pathway amino-acid biosynthesis; L-tryptophan biosynthesis; L-tryptophan from chorismate: step 2/5. In terms of biological role, catalyzes the transfer of the phosphoribosyl group of 5-phosphorylribose-1-pyrophosphate (PRPP) to anthranilate to yield N-(5'-phosphoribosyl)-anthranilate (PRA). The sequence is that of Anthranilate phosphoribosyltransferase from Bacillus cereus (strain ATCC 14579 / DSM 31 / CCUG 7414 / JCM 2152 / NBRC 15305 / NCIMB 9373 / NCTC 2599 / NRRL B-3711).